A 129-amino-acid polypeptide reads, in one-letter code: MNHDPLNDVINTIKNASRIGKSEVIIGPASVMIGRILKVMQDYNYIKSFEVIEEERGGKFRVELSDTINNCGVIKPRLSVKNSNIERYESRYLPAQDFGIIILTTTKGIMSHIEARKLGIGGKLLAYVY.

The protein belongs to the universal ribosomal protein uS8 family. Part of the 30S ribosomal subunit.

In terms of biological role, one of the primary rRNA binding proteins, it binds directly to 16S rRNA central domain where it helps coordinate assembly of the platform of the 30S subunit. This is Small ribosomal subunit protein uS8 from Picrophilus torridus (strain ATCC 700027 / DSM 9790 / JCM 10055 / NBRC 100828 / KAW 2/3).